The following is a 62-amino-acid chain: Large ribosomal subunit protein uL29 (62 aa).

The protein belongs to the universal ribosomal protein uL29 family.

In Desulfatibacillum aliphaticivorans, this protein is Large ribosomal subunit protein uL29.